The primary structure comprises 497 residues: Tyrosine-protein kinase SPK-1 (497 aa).

A disordered region spans residues 1–25 (MGQKFSIKCKKQSKNKNTSKCQKIP). Residues 33–94 (PGSYMVKAKY…PSNYVSKQDG (62 aa)) enclose the SH3 domain. The SH2 domain maps to 100–200 (EAWREIQRWE…NTHIPLTDPM (101 aa)). Residues 220-482 (IEILNEIGRG…LVLQEKMDLL (263 aa)) enclose the Protein kinase domain. Residues 226-234 (IGRGFFGSV) and K248 each bind ATP. D342 functions as the Proton acceptor in the catalytic mechanism.

It belongs to the protein kinase superfamily. Tyr protein kinase family.

The catalysed reaction is L-tyrosyl-[protein] + ATP = O-phospho-L-tyrosyl-[protein] + ADP + H(+). The protein is Tyrosine-protein kinase SPK-1 of Girardia tigrina (Planarian).